A 432-amino-acid polypeptide reads, in one-letter code: Adhesin YadA (432 aa).

The first 25 residues, 1-25, serve as a signal peptide directing secretion; the sequence is MTKDFKISVSAALISALFSSPYAFA. Residues 26-340 are surface exposed passenger domain; the sequence is EEPEDGNDGI…KKAISESNQY (315 aa). Residues 242 to 263 adopt a coiled-coil conformation; that stretch reads VNVAQLKKEMAETLENARKETL. Residues 341–379 are outer membrane translocation of the passenger domain; that stretch reads TDHKFSQLDNRLDKLDKRVDKGLASSAALNSLFQPYGVG. The next 4 membrane-spanning stretches (beta stranded) occupy residues 379-389, 393-404, 411-417, and 421-432; these read GKVNFTAGVGG, SQALAIGSGYRV, KAGVAYA, and NVMYNASFNIEW. The interval 380–432 is translocator domain; sequence KVNFTAGVGGYRSSQALAIGSGYRVNESVALKAGVAYAGSSNVMYNASFNIEW.

This sequence belongs to the autotransporter-2 (AT-2) (TC 1.B.40) family. Homotrimer.

It is found in the cell surface. It localises to the cell outer membrane. Functionally, collagen-binding outer membrane protein forming a fibrillar matrix on the bacterial cell surface. Promotes attachment to eukaryotic cells and after invasion, is the major adhesin in infected tissue. Constitutes an alternative uptake pathway under conditions in which invasin synthesis is repressed. This is Adhesin YadA (yadA) from Yersinia pseudotuberculosis serotype I (strain IP32953).